Reading from the N-terminus, the 672-residue chain is Cytadherence high molecular weight protein 3 (672 aa).

25 repeat units span residues 98 to 100 (YDQ), 106 to 108 (YDQ), 160 to 162 (PVV), 197 to 199 (YDQ), 206 to 208 (YDQ), 211 to 213 (YDQ), 221 to 223 (YDQ), 226 to 228 (YDQ), 235 to 237 (YDQ), 249 to 251 (YDQ), 288 to 290 (PVV), 310 to 319 (VEPTPTPVVE), 312 to 315 (PTPT), 316 to 318 (PVV), 322 to 324 (PVV), 330 to 339 (VEPTPTPVVE), 332 to 335 (PTPT), 336 to 338 (PVV), 354 to 358 (PQPTP), 385 to 389 (PTPVP), 396 to 400 (PQPTP), 402 to 404 (PVV), 413 to 415 (PVV), 424 to 428 (PTPAP), and 454 to 456 (PVV). Residues 98-251 (YDQVNNTFYD…NAYNTQNYDQ (154 aa)) are 9 X 3 AA repeats OF Y-D-Q. The 8 X 3 AA repeats of P-V-V stretch occupies residues 160–456 (PVVDPDATPE…QTTPAVPPVV (297 aa)). Residues 177–197 (GLDPLPQAPDEYQDTTAPPAY) are disordered. The interval 310-339 (VEPTPTPVVETAPVVEAPKVVEPTPTPVVE) is 2 X 10 AA repeats of V-E-P-T-P-T-P-V-V-E. Positions 312–428 (PTPTPVVETA…PKVVTPTPAP (117 aa)) are 6 X 5 AA repeats of P-X-P-X-P.

It localises to the cell projection. The protein resides in the attachment organelle membrane. Its function is as follows. Component of the cytoskeleton-like structure which stabilizes the shape of the wall-less mycoplasma. This cytoskeleton-like network of accessory proteins containing HMW proteins 1 to 5 allows the proper anchoring of cytadhesin proteins in the mycoplasmal membrane at the attachment organelle. Essential for successful surface parasitism. The sequence is that of Cytadherence high molecular weight protein 3 (hmw3) from Mycoplasma pneumoniae (strain ATCC 29342 / M129 / Subtype 1) (Mycoplasmoides pneumoniae).